A 334-amino-acid polypeptide reads, in one-letter code: Nucleoid-associated protein plu2870 (334 aa).

The protein belongs to the YejK family.

The protein localises to the cytoplasm. Its subcellular location is the nucleoid. The chain is Nucleoid-associated protein plu2870 from Photorhabdus laumondii subsp. laumondii (strain DSM 15139 / CIP 105565 / TT01) (Photorhabdus luminescens subsp. laumondii).